The following is a 426-amino-acid chain: Tachykinins (426 aa).

The propeptide occupies 1-116 (MQCDFRVHQD…IEDNLSHEFE (116 aa)). Residue R127 is modified to Arginine amide. A propeptide spanning residues 131–145 (GYLTPDFEDSYFRDE) is cleaved from the precursor. An Arginine amide modification is found at R156. A propeptide spanning residues 160 to 167 (VVSDDDYY) is cleaved from the precursor. Arginine amide is present on R178. The propeptide occupies 182-235 (SLEEVLGEIEKKAAMDYYDTRDKKTYVFEYPEDYEKRLLASIRGKLKEFPMEWE). At R246 the chain carries Arginine amide. The propeptide occupies 250 to 259 (SLLDEIEELE). R270 is subject to Arginine amide. The propeptide occupies 274 to 291 (NALENYIDYYLDPDMDFD). Residues 299-329 (QGMRGKKDSDKRAPMGFQGMRGKRNTGQRFD) form a disordered region. The residue at position 302 (R302) is an Arginine amide. A propeptide spanning residues 306–308 (DSD) is cleaved from the precursor. Residue R319 is modified to Arginine amide. Residues 323–358 (NTGQRFDTGINFNIRSSNEYQGTNNRRNALASCQLE) constitute a propeptide that is removed on maturation. Residues R369 and R386 each carry the arginine amide modification. Residues 390–426 (WATAPYEDDSPFISVFDNTERIGVDGDSPAILGNSIS) constitute a propeptide that is removed on maturation.

The protein belongs to the tachykinin family. As to expression, tachykinins (TK) are expressed throughout the nervous system. APMGFQGMR-amide is also expressed in the retrocerebral complex (at protein level).

It is found in the secreted. Tachykinins are active peptides which excite neurons, evoke behavioral responses, are potent vasodilators and secretagogues, and contract (directly or indirectly) many smooth muscles. The sequence is that of Tachykinins from Camponotus floridanus (Florida carpenter ant).